The following is an 87-amino-acid chain: Small ribosomal subunit protein bS20 (87 aa).

The segment at 1-20 is disordered; that stretch reads MANHKSAEKRARQTIKKTER.

It belongs to the bacterial ribosomal protein bS20 family.

In terms of biological role, binds directly to 16S ribosomal RNA. This chain is Small ribosomal subunit protein bS20, found in Campylobacter jejuni subsp. jejuni serotype O:2 (strain ATCC 700819 / NCTC 11168).